Consider the following 524-residue polypeptide: Light-independent protochlorophyllide reductase subunit B (524 aa).

A [4Fe-4S] cluster-binding site is contributed by Asp-36. The active-site Proton donor is the Asp-290. 425–426 is a binding site for substrate; sequence GL.

This sequence belongs to the ChlB/BchB/BchZ family. As to quaternary structure, protochlorophyllide reductase is composed of three subunits; ChlL, ChlN and ChlB. Forms a heterotetramer of two ChlB and two ChlN subunits. The cofactor is [4Fe-4S] cluster.

The enzyme catalyses chlorophyllide a + oxidized 2[4Fe-4S]-[ferredoxin] + 2 ADP + 2 phosphate = protochlorophyllide a + reduced 2[4Fe-4S]-[ferredoxin] + 2 ATP + 2 H2O. Its pathway is porphyrin-containing compound metabolism; chlorophyll biosynthesis (light-independent). In terms of biological role, component of the dark-operative protochlorophyllide reductase (DPOR) that uses Mg-ATP and reduced ferredoxin to reduce ring D of protochlorophyllide (Pchlide) to form chlorophyllide a (Chlide). This reaction is light-independent. The NB-protein (ChlN-ChlB) is the catalytic component of the complex. The protein is Light-independent protochlorophyllide reductase subunit B of Synechococcus sp. (strain CC9605).